We begin with the raw amino-acid sequence, 315 residues long: Porphobilinogen deaminase (315 aa).

Cysteine 245 is subject to S-(dipyrrolylmethanemethyl)cysteine.

It belongs to the HMBS family. In terms of assembly, monomer. Dipyrromethane is required as a cofactor.

The enzyme catalyses 4 porphobilinogen + H2O = hydroxymethylbilane + 4 NH4(+). It functions in the pathway porphyrin-containing compound metabolism; protoporphyrin-IX biosynthesis; coproporphyrinogen-III from 5-aminolevulinate: step 2/4. Its pathway is porphyrin-containing compound metabolism; chlorophyll biosynthesis. In terms of biological role, tetrapolymerization of the monopyrrole PBG into the hydroxymethylbilane pre-uroporphyrinogen in several discrete steps. The chain is Porphobilinogen deaminase from Prochlorococcus marinus (strain NATL1A).